A 318-amino-acid polypeptide reads, in one-letter code: Olfactory receptor 51E1 (318 aa).

Over 1 to 31 the chain is Extracellular; that stretch reads MMVDPNGNESSATYFILIGLPGLEEAQFWLA. Asparagine 8 is a glycosylation site (N-linked (GlcNAc...) asparagine). A helical transmembrane segment spans residues 32–52; that stretch reads FPLCSLYLIAVLGNLTIIYIV. The Cytoplasmic portion of the chain corresponds to 53–60; that stretch reads RTEHSLHE. The helical transmembrane segment at 61–81 threads the bilayer; the sequence is PMYIFLCMLSGIDILISTSSM. Over 82–100 the chain is Extracellular; that stretch reads PKMLAIFWFNSTTIQFDAC. The N-linked (GlcNAc...) asparagine glycan is linked to asparagine 91. The cysteines at positions 100 and 182 are disulfide-linked. Residues 101–123 form a helical membrane-spanning segment; that stretch reads LLQMFAIHSLSGMESTVLLAMAF. Residues 124 to 145 lie on the Cytoplasmic side of the membrane; it reads DRYVAICHPLRHATVLTLPRVT. Residues 146-166 form a helical membrane-spanning segment; the sequence is KIGVAAVVRGAALMAPLPVFI. The Extracellular portion of the chain corresponds to 167-198; sequence KQLPFCRSNILSHSYCLHQDVMKLACDDIRVN. The chain crosses the membrane as a helical span at residues 199–219; sequence VVYGLIVIISAIGLDSLLISF. Residues 220–239 are Cytoplasmic-facing; that stretch reads SYLLILKTVLGLTREAQAKA. The helical transmembrane segment at 240–260 threads the bilayer; that stretch reads FGTCVSHVCAVFIFYVPFIGL. Over 261 to 275 the chain is Extracellular; the sequence is SMVHRFSKRRDSPLP. A helical transmembrane segment spans residues 276-296; the sequence is VILANIYLLVPPVLNPIVYGV. Residues 297–318 lie on the Cytoplasmic side of the membrane; it reads KTKEIRQRILRLFHVATHASEP.

Belongs to the G-protein coupled receptor 1 family. Highly expressed in prostate. Very low levels may be detected in some other tissues, such as placenta, skeletal muscle, heart, ovary and testis. Up-regulated in prostate cancers.

It localises to the cell membrane. Odorant receptor. The polypeptide is Olfactory receptor 51E1 (OR51E1) (Homo sapiens (Human)).